We begin with the raw amino-acid sequence, 209 residues long: Urease accessory protein UreG (209 aa).

16–23 (GPVGSGKT) lines the GTP pocket.

Belongs to the SIMIBI class G3E GTPase family. UreG subfamily. In terms of assembly, homodimer. UreD, UreF and UreG form a complex that acts as a GTP-hydrolysis-dependent molecular chaperone, activating the urease apoprotein by helping to assemble the nickel containing metallocenter of UreC. The UreE protein probably delivers the nickel.

Its subcellular location is the cytoplasm. Facilitates the functional incorporation of the urease nickel metallocenter. This process requires GTP hydrolysis, probably effectuated by UreG. This is Urease accessory protein UreG from Blochmanniella floridana.